We begin with the raw amino-acid sequence, 140 residues long: Organic hydroperoxide resistance protein-like (140 aa).

This sequence belongs to the OsmC/Ohr family.

The chain is Organic hydroperoxide resistance protein-like from Staphylococcus aureus (strain MSSA476).